The primary structure comprises 425 residues: Monoacylglycerol lipase ABHD2 (425 aa).

Over 1-9 (MNAMLETPE) the chain is Cytoplasmic. The helical; Signal-anchor for type II membrane protein transmembrane segment at 10 to 30 (LPAVFDGVKLAAVAAVLYVIV) threads the bilayer. Residues 31–425 (RCLNLKSPTA…DTEQVEADLE (395 aa)) are Extracellular-facing. The region spanning 128–382 (MVICPGIANH…HGGHLGFFEG (255 aa)) is the AB hydrolase-1 domain. A glycan (N-linked (GlcNAc...) asparagine) is linked at asparagine 136. The active-site Nucleophile is the serine 207. Residues aspartate 345 and histidine 376 each act as charge relay system in the active site.

It belongs to the AB hydrolase superfamily. AB hydrolase 4 family. In terms of tissue distribution, present in sperm (at protein level).

The protein resides in the cell projection. It is found in the cilium. The protein localises to the flagellum membrane. It localises to the cell membrane. The catalysed reaction is an acetyl ester + H2O = an aliphatic alcohol + acetate + H(+). It carries out the reaction Hydrolyzes glycerol monoesters of long-chain fatty acids.. The enzyme catalyses a triacylglycerol + H2O = a diacylglycerol + a fatty acid + H(+). It catalyses the reaction 2-(5Z,8Z,11Z,14Z-eicosatetraenoyl)-glycerol + H2O = glycerol + (5Z,8Z,11Z,14Z)-eicosatetraenoate + H(+). The catalysed reaction is a butanoate ester + H2O = an aliphatic alcohol + butanoate + H(+). It carries out the reaction hexadecanoate ester + H2O = an aliphatic alcohol + hexadecanoate + H(+). Its activity is regulated as follows. Acylglycerol lipase activity is activated upon binding to progesterone. Functionally, progesterone-dependent acylglycerol lipase that catalyzes hydrolysis of endocannabinoid arachidonoylglycerol (AG) from cell membrane. Acts as a progesterone receptor: progesterone-binding activates the acylglycerol lipase activity, mediating degradation of 1-arachidonoylglycerol (1AG) and 2-arachidonoylglycerol (2AG) to glycerol and arachidonic acid (AA). Also displays an ester hydrolase activity against acetyl ester, butanoate ester and hexadecanoate ester. Plays a key role in sperm capacitation in response to progesterone by mediating degradation of 2AG, an inhibitor of the sperm calcium channel CatSper, leading to calcium influx via CatSper and sperm activation. May also play a role in smooth muscle cells migration. The protein is Monoacylglycerol lipase ABHD2 of Homo sapiens (Human).